Here is a 64-residue protein sequence, read N- to C-terminus: Large ribosomal subunit protein bL33c (64 aa).

The protein belongs to the bacterial ribosomal protein bL33 family.

It localises to the plastid. It is found in the chloroplast. This Mesostigma viride (Green alga) protein is Large ribosomal subunit protein bL33c (rpl33).